The sequence spans 425 residues: Serine--tRNA ligase (425 aa).

229–231 lines the L-serine pocket; it reads TSE. ATP-binding positions include 259–261 and Val-275; that span reads RKE. Residue Glu-282 coordinates L-serine. Residue 349 to 352 coordinates ATP; that stretch reads EVTS. Thr-384 provides a ligand contact to L-serine.

Belongs to the class-II aminoacyl-tRNA synthetase family. Type-1 seryl-tRNA synthetase subfamily. In terms of assembly, homodimer. The tRNA molecule binds across the dimer.

The protein localises to the cytoplasm. It catalyses the reaction tRNA(Ser) + L-serine + ATP = L-seryl-tRNA(Ser) + AMP + diphosphate + H(+). The enzyme catalyses tRNA(Sec) + L-serine + ATP = L-seryl-tRNA(Sec) + AMP + diphosphate + H(+). It participates in aminoacyl-tRNA biosynthesis; selenocysteinyl-tRNA(Sec) biosynthesis; L-seryl-tRNA(Sec) from L-serine and tRNA(Sec): step 1/1. Catalyzes the attachment of serine to tRNA(Ser). Is also able to aminoacylate tRNA(Sec) with serine, to form the misacylated tRNA L-seryl-tRNA(Sec), which will be further converted into selenocysteinyl-tRNA(Sec). The protein is Serine--tRNA ligase of Borrelia garinii subsp. bavariensis (strain ATCC BAA-2496 / DSM 23469 / PBi) (Borreliella bavariensis).